We begin with the raw amino-acid sequence, 504 residues long: Glycerol kinase (504 aa).

Residue threonine 13 participates in ADP binding. 3 residues coordinate ATP: threonine 13, threonine 14, and serine 15. Threonine 13 contributes to the sn-glycerol 3-phosphate binding site. ADP is bound at residue arginine 17. Sn-glycerol 3-phosphate is bound by residues arginine 83, glutamate 84, and tyrosine 135. Glycerol is bound by residues arginine 83, glutamate 84, and tyrosine 135. A Phosphohistidine; by HPr modification is found at histidine 231. Position 245 (aspartate 245) interacts with sn-glycerol 3-phosphate. Residues aspartate 245 and glutamine 246 each contribute to the glycerol site. Positions 267 and 310 each coordinate ADP. The ATP site is built by threonine 267, glycine 310, glutamine 314, and glycine 411. 2 residues coordinate ADP: glycine 411 and asparagine 415.

Belongs to the FGGY kinase family. In terms of assembly, homotetramer and homodimer (in equilibrium). The phosphoenolpyruvate-dependent sugar phosphotransferase system (PTS), including enzyme I, and histidine-containing protein (HPr) are required for the phosphorylation, which leads to the activation of the enzyme.

It catalyses the reaction glycerol + ATP = sn-glycerol 3-phosphate + ADP + H(+). It functions in the pathway polyol metabolism; glycerol degradation via glycerol kinase pathway; sn-glycerol 3-phosphate from glycerol: step 1/1. Its activity is regulated as follows. Activated by phosphorylation and inhibited by fructose 1,6-bisphosphate (FBP). Its function is as follows. Key enzyme in the regulation of glycerol uptake and metabolism. Catalyzes the phosphorylation of glycerol to yield sn-glycerol 3-phosphate. This Pediococcus pentosaceus (strain ATCC 25745 / CCUG 21536 / LMG 10740 / 183-1w) protein is Glycerol kinase.